The following is a 249-amino-acid chain: Ribonuclease 3 (249 aa).

The RNase III domain maps to 20–149; that stretch reads FKKFQERISV…FIGALYLDQG (130 aa). Glu-62 is a binding site for Mg(2+). Residue Asp-66 is part of the active site. Residues Asp-135 and Glu-138 each contribute to the Mg(2+) site. Glu-138 is a catalytic residue. Positions 175-244 constitute a DRBM domain; sequence DFKSQLQEFV…AQEALAKLQK (70 aa). The tract at residues 225-249 is disordered; that stretch reads RSKKEAEQHAAQEALAKLQKHHMKQ.

It belongs to the ribonuclease III family. Homodimer. Mg(2+) serves as cofactor.

It localises to the cytoplasm. The catalysed reaction is Endonucleolytic cleavage to 5'-phosphomonoester.. In terms of biological role, digests double-stranded RNA. Involved in the processing of primary rRNA transcript to yield the immediate precursors to the large and small rRNAs (23S and 16S). Processes some mRNAs, and tRNAs when they are encoded in the rRNA operon. Processes pre-crRNA and tracrRNA of type II CRISPR loci if present in the organism. The polypeptide is Ribonuclease 3 (Bacillus licheniformis (strain ATCC 14580 / DSM 13 / JCM 2505 / CCUG 7422 / NBRC 12200 / NCIMB 9375 / NCTC 10341 / NRRL NRS-1264 / Gibson 46)).